The following is a 122-amino-acid chain: Large ribosomal subunit protein uL14 (122 aa).

Belongs to the universal ribosomal protein uL14 family. Part of the 50S ribosomal subunit. Forms a cluster with proteins L3 and L19. In the 70S ribosome, L14 and L19 interact and together make contacts with the 16S rRNA in bridges B5 and B8.

Binds to 23S rRNA. Forms part of two intersubunit bridges in the 70S ribosome. In Parafrankia sp. (strain EAN1pec), this protein is Large ribosomal subunit protein uL14.